The following is a 101-amino-acid chain: Growth-regulated alpha protein (101 aa).

An N-terminal signal peptide occupies residues 1 to 28 (MAPATRSLLRAPLLLLLLLLATSRLATG). Disulfide bonds link cysteine 37/cysteine 63 and cysteine 39/cysteine 79.

Belongs to the intercrine alpha (chemokine CxC) family.

The protein localises to the secreted. Its function is as follows. Has chemotactic activity for neutrophils. This Cricetulus griseus (Chinese hamster) protein is Growth-regulated alpha protein (CXCL1).